Reading from the N-terminus, the 213-residue chain is von Hippel-Lindau disease tumor suppressor (213 aa).

A disordered region spans residues 1-65; it reads MPRRAENWDE…AGRPRPVLRS (65 aa). The span at 8-54 shows a compositional bias: acidic residues; it reads WDEAEVGAEEAGVEEYGPEEDGGEESGAEESGPEESGPEELGAEEEM. Tandem repeats lie at residues 14–18, 19–23, 24–28, 29–33, 34–38, 39–43, 44–48, and 49–53. An 8 X 5 AA tandem repeats of G-[PAVG]-E-E-[DAYSLE] region spans residues 14–53; that stretch reads GAEEAGVEEYGPEEDGGEESGAEESGPEESGPEELGAEEE. An involved in binding to CCT complex region spans residues 100-155; sequence TLPPGTGRRIHSYRGHLWLFRDAGTHDGLLVNQTELFVPSLNVDGQPIFANITLPV. Residues 157–166 are interaction with Elongin BC complex; that stretch reads TLKERCLQVV.

The protein belongs to the VHL family. In terms of assembly, component of the VCB (VHL-Elongin BC-CUL2) complex; this complex acts as a ubiquitin-ligase E3 and directs proteasome-dependent degradation of targeted proteins. Interacts with CUL2; this interaction is dependent on the integrity of the trimeric VCB complex. Interacts (via the beta domain) with HIF1A (via the NTAD domain); this interaction mediates degradation of HIF1A in normoxia and, in hypoxia, prevents ubiquitination and degradation of HIF1A by mediating hypoxia-induced translocation to the nucleus, a process which requires a hypoxia-dependent regulatory signal. Interacts with ADRB2; the interaction, in normoxia, is dependent on hydroxylation of ADRB2 and the subsequent VCB-mediated ubiquitination and degradation of ADRB2. Under hypoxia, hydroxylation, interaction with VHL, ubiquitination and subsequent degradation of ADRB2 are dramatically decreased. Interacts with RNF139, USP33 and JADE1. Found in a complex composed of LIMD1, VHL, EGLN1/PHD2, ELOB and CUL2. Isoform 1 and isoform 3 interact with LIMD1 (via LIM zinc-binding 2), AJUBA (via LIM domains) and WTIP (via LIM domains). Interacts with EPAS1. Interacts with CARD9. Interacts with DCUN1D1 independently of CUL2; this interaction engages DCUN1D1 in the VCB complex and triggers CUL2 neddylation and consequently cullin ring ligase (CRL) substrates polyubiquitylation. Interacts with ALAS1 (hydroxylated form). Interacts with IGFBP1. As to expression, expressed in the adult and fetal brain and kidney.

It localises to the cytoplasm. It is found in the cell membrane. The protein localises to the endoplasmic reticulum. The protein resides in the nucleus. It functions in the pathway protein modification; protein ubiquitination. Its function is as follows. Involved in the ubiquitination and subsequent proteasomal degradation via the von Hippel-Lindau ubiquitination complex. Seems to act as a target recruitment subunit in the E3 ubiquitin ligase complex and recruits hydroxylated hypoxia-inducible factor (HIF) under normoxic conditions. Involved in transcriptional repression through interaction with HIF1A, HIF1AN and histone deacetylases. Ubiquitinates, in an oxygen-responsive manner, ADRB2. Acts as a negative regulator of mTORC1 by promoting ubiquitination and degradation of RPTOR. The protein is von Hippel-Lindau disease tumor suppressor (VHL) of Homo sapiens (Human).